The following is a 348-amino-acid chain: Major outer membrane protein P.IB (348 aa).

The signal sequence occupies residues 1–19 (MKKSLIALTLAALPVAAMA).

Belongs to the Gram-negative porin family. Homotrimer.

It localises to the cell outer membrane. Functionally, serves as a slightly cation selective porin. Major antigen on the gonococcal cell surface and it may have pathogenic properties in addition to its porin activity. This Neisseria gonorrhoeae protein is Major outer membrane protein P.IB (porB).